A 150-amino-acid polypeptide reads, in one-letter code: FAD synthase (150 aa).

ATP contacts are provided by residues 10–11, 15–18, aspartate 97, and tyrosine 124; these read VF and HPGH.

It belongs to the archaeal FAD synthase family. As to quaternary structure, homodimer. A divalent metal cation serves as cofactor.

It catalyses the reaction FMN + ATP + H(+) = FAD + diphosphate. The protein operates within cofactor biosynthesis; FAD biosynthesis; FAD from FMN: step 1/1. Its function is as follows. Catalyzes the transfer of the AMP portion of ATP to flavin mononucleotide (FMN) to produce flavin adenine dinucleotide (FAD) coenzyme. This chain is FAD synthase, found in Methanopyrus kandleri (strain AV19 / DSM 6324 / JCM 9639 / NBRC 100938).